The sequence spans 307 residues: Metapyrocatechase (307 aa).

2 VOC domains span residues arginine 7 to aspartate 122 and arginine 150 to glycine 269. Residues histidine 153, histidine 214, and glutamate 265 each contribute to the Fe cation site.

The protein belongs to the extradiol ring-cleavage dioxygenase family. Homotetramer. Fe(2+) is required as a cofactor.

It carries out the reaction catechol + O2 = (2Z,4E)-2-hydroxy-6-oxohexa-2,4-dienoate + H(+). It participates in aromatic compound metabolism; benzoate degradation via hydroxylation. This is Metapyrocatechase (dmpB) from Pseudomonas sp. (strain CF600).